Reading from the N-terminus, the 195-residue chain is Cholesin (195 aa).

The interval 1–78 (MAKHKRKGLE…KEEKKRLREA (78 aa)) is disordered. Basic and acidic residues-rich tracts occupy residues 8–18 (GLEGTGKESKR) and 26–39 (ETPRTSEAGPDKET). Phosphoserine occurs at positions 41, 48, and 52. A compositionally biased stretch (basic and acidic residues) spans 53 to 77 (PEERRVLERKLKKERKKEEKKRLRE). S96 carries the phosphoserine modification.

As to expression, secreted via exosomes, secreted from the instestine, secretion is induced by feeding and cholesterol absorption. Expressed in enterocytes.

The protein localises to the secreted. In terms of biological role, hormone secreted from the intestine in response to cholesterol, where it acts to inhibit cholesterol synthesis in the liver and VLDL secretion,leading to a reduction in circulating cholesterol levels. Acts through binding to its receptor, GPR146. This is Cholesin (Chlsn) from Mus musculus (Mouse).